The primary structure comprises 415 residues: 26S proteasome regulatory subunit 6B (415 aa).

ATP is bound at residue 203-210 (GPPGCGKT).

Belongs to the AAA ATPase family.

The protein localises to the cytoplasm. It is found in the nucleus. In terms of biological role, the 26S proteasome is involved in the ATP-dependent degradation of ubiquitinated proteins. The regulatory (or ATPase) complex confers ATP dependency and substrate specificity to the 26S complex. The protein is 26S proteasome regulatory subunit 6B of Manduca sexta (Tobacco hawkmoth).